The primary structure comprises 381 residues: Transaldolase 2 (381 aa).

Lys141 (schiff-base intermediate with substrate) is an active-site residue.

The protein belongs to the transaldolase family. Type 2 subfamily.

Its subcellular location is the cytoplasm. The catalysed reaction is D-sedoheptulose 7-phosphate + D-glyceraldehyde 3-phosphate = D-erythrose 4-phosphate + beta-D-fructose 6-phosphate. It functions in the pathway carbohydrate degradation; pentose phosphate pathway; D-glyceraldehyde 3-phosphate and beta-D-fructose 6-phosphate from D-ribose 5-phosphate and D-xylulose 5-phosphate (non-oxidative stage): step 2/3. Functionally, transaldolase is important for the balance of metabolites in the pentose-phosphate pathway. The polypeptide is Transaldolase 2 (tal2) (Nostoc sp. (strain PCC 7120 / SAG 25.82 / UTEX 2576)).